The chain runs to 453 residues: Trigger factor (453 aa).

The 86-residue stretch at Gly171–Ile256 folds into the PPIase FKBP-type domain.

Belongs to the FKBP-type PPIase family. Tig subfamily.

The protein resides in the cytoplasm. It carries out the reaction [protein]-peptidylproline (omega=180) = [protein]-peptidylproline (omega=0). Its function is as follows. Involved in protein export. Acts as a chaperone by maintaining the newly synthesized protein in an open conformation. Functions as a peptidyl-prolyl cis-trans isomerase. The protein is Trigger factor of Nitrobacter hamburgensis (strain DSM 10229 / NCIMB 13809 / X14).